Here is a 470-residue protein sequence, read N- to C-terminus: Glutamate--tRNA ligase (470 aa).

The 'HIGH' region motif lies at 12–22 (PSPTGIFHVGG). Zn(2+)-binding residues include Cys103, Cys105, Cys125, and Asp127. The short motif at 236-240 (KLSKR) is the 'KMSKS' region element. An ATP-binding site is contributed by Lys239.

This sequence belongs to the class-I aminoacyl-tRNA synthetase family. Glutamate--tRNA ligase type 1 subfamily. Monomer. It depends on Zn(2+) as a cofactor.

Its subcellular location is the cytoplasm. It carries out the reaction tRNA(Glu) + L-glutamate + ATP = L-glutamyl-tRNA(Glu) + AMP + diphosphate. Its function is as follows. Catalyzes the attachment of glutamate to tRNA(Glu) in a two-step reaction: glutamate is first activated by ATP to form Glu-AMP and then transferred to the acceptor end of tRNA(Glu). This is Glutamate--tRNA ligase from Frankia alni (strain DSM 45986 / CECT 9034 / ACN14a).